The sequence spans 948 residues: Hexagonally packed intermediate-layer surface protein (948 aa).

Residues 1–17 form the signal peptide; that stretch reads MKKNIALMALTGILTLA. 2 cysteine pairs are disulfide-bonded: cysteine 168/cysteine 187 and cysteine 554/cysteine 666.

Glycosylated. Contains tightly bound reducing sugars (six per polypeptide chain) and fatty acids (covalently bound and located in the N-terminal region).

Its subcellular location is the secreted. The protein resides in the cell wall. It localises to the S-layer. Its function is as follows. Shape maintenance, possible protection from noxious enzymes or exogenous and unsettling DNA, and may mediate homotypic cell-cell contacts. This chain is Hexagonally packed intermediate-layer surface protein (hpi), found in Deinococcus radiodurans (strain ATCC 13939 / DSM 20539 / JCM 16871 / CCUG 27074 / LMG 4051 / NBRC 15346 / NCIMB 9279 / VKM B-1422 / R1).